We begin with the raw amino-acid sequence, 148 residues long: Universal stress protein YxiE (148 aa).

Positions Met1–Ala18 are cleaved as a signal peptide.

The protein belongs to the universal stress protein A family.

The protein is Universal stress protein YxiE (yxiE) of Bacillus subtilis (strain 168).